Reading from the N-terminus, the 318-residue chain is Cobalamin biosynthesis protein CobD (318 aa).

5 helical membrane-spanning segments follow: residues 56-76 (VLWL…LWLM), 78-98 (EINP…LLAG), 153-173 (VDGV…LAMA), 204-224 (LANW…AWLI), and 298-318 (MMAS…LVGI).

Belongs to the CobD/CbiB family.

Its subcellular location is the cell membrane. Its pathway is cofactor biosynthesis; adenosylcobalamin biosynthesis. Converts cobyric acid to cobinamide by the addition of aminopropanol on the F carboxylic group. The chain is Cobalamin biosynthesis protein CobD from Yersinia enterocolitica serotype O:8 / biotype 1B (strain NCTC 13174 / 8081).